A 228-amino-acid chain; its full sequence is Pyridoxal phosphate homeostasis protein (228 aa).

Lys35 is modified (N6-(pyridoxal phosphate)lysine).

This sequence belongs to the pyridoxal phosphate-binding protein YggS/PROSC family.

In terms of biological role, pyridoxal 5'-phosphate (PLP)-binding protein, which is involved in PLP homeostasis. In Aquifex aeolicus (strain VF5), this protein is Pyridoxal phosphate homeostasis protein.